The following is a 178-amino-acid chain: ATP-dependent protease subunit HslV (178 aa).

Thr7 is a catalytic residue. 3 residues coordinate Na(+): Gly162, Cys165, and Thr168.

Belongs to the peptidase T1B family. HslV subfamily. As to quaternary structure, a double ring-shaped homohexamer of HslV is capped on each side by a ring-shaped HslU homohexamer. The assembly of the HslU/HslV complex is dependent on binding of ATP.

It localises to the cytoplasm. It carries out the reaction ATP-dependent cleavage of peptide bonds with broad specificity.. With respect to regulation, allosterically activated by HslU binding. Its function is as follows. Protease subunit of a proteasome-like degradation complex believed to be a general protein degrading machinery. The sequence is that of ATP-dependent protease subunit HslV from Burkholderia orbicola (strain AU 1054).